Consider the following 329-residue polypeptide: Flotillin-like protein FloA (329 aa).

The next 2 membrane-spanning stretches (helical) occupy residues 4–24 and 27–47; these read FIPF…ILSF and VGLW…TLVG.

The protein belongs to the flotillin-like FloA family. Homooligomerizes.

The protein localises to the cell membrane. It is found in the membrane raft. In terms of biological role, found in functional membrane microdomains (FMM) that may be equivalent to eukaryotic membrane rafts. FMMs are highly dynamic and increase in number as cells age. Flotillins are thought to be important factors in membrane fluidity. This is Flotillin-like protein FloA from Alkaliphilus metalliredigens (strain QYMF).